The following is a 515-amino-acid chain: MDPRETTDPSLPPGPLTHLSLPDSSEVRLQSDGPSLLGSWTRSPPEHAIILREGVRTCLQQRCEQTVWILHAKVAQKSYGNEKRFFCPPPCVYLAGPGWRVKPMQDQALQSAETGPTVCGYMGLDGASGSAPETQKLNFEEQPDSREFGCAKTLYISDADKRKHFRLVLRLVLRGGQELGTFHSRLIKVISKPSQKKQSLKNTDLCISSGSKVSLFNRLRSQTVSTRYLSVEDGAFVASARQWAAFTLHLADGHCSQGDFPPQEGYIRYGSLVQLVCTVTGITLPPMIIRKVAKQCALLDVDEPISQLHKCAFQFPSDTPGGAGTYLCLATEKVVRFQASLCPKEANRALLNDSSCWTIIGTESVEFTFSTSLACTREPVTPVPLISTLELSGGGDVATLELHGENFHAGLKVWFGDVEAETMYRSPRSLVCVVPDVAAFGSDWRWLRTPITVPVSLLRADALFYPSPFSFTYTPEYSALPRLPNAQEPAPDADTLLESIHHEFTRTNFHLFCPT.

Positions 1–40 are disordered; sequence MDPRETTDPSLPPGPLTHLSLPDSSEVRLQSDGPSLLGSW. DNA-binding stretches follow at residues 76 to 86, 191 to 196, and 218 to 223; these read QKSYGNEKRFF, SKPSQK, and RLRSQT. Residues 384–474 enclose the IPT/TIG domain; sequence PLISTLELSG…YPSPFSFTYT (91 aa).

The protein belongs to the Su(H) family. As to quaternary structure, interacts weakly with EBNA2. Does not interact with any Notch proteins. In terms of tissue distribution, highly expressed in lung. Also detected in spleen, and brain.

It localises to the nucleus. Putative transcription factor, which cooperates with EBNA2 to activate transcription. The protein is Recombining binding protein suppressor of hairless-like protein (Rbpjl) of Mus musculus (Mouse).